Consider the following 954-residue polypeptide: Endogenous retrovirus group K member 25 Pol protein (954 aa).

In terms of domain architecture, Reverse transcriptase spans 57 to 245 (LEKGHIEPSF…TPFHYLGMQI (189 aa)). The LPQG signature appears at 161–164 (LPQG). A YXDD motif is present at residues 195–198 (YIDD). The RNase H type-1 domain occupies 460-588 (LENALTVFTD…ADLLVSSALI (129 aa)). Mg(2+) is bound by residues Asp-469, Glu-497, Asp-515, and Asp-580. An Integrase-type zinc finger spans residues 585 to 626 (SALIKAQELHALTHVNAAGLKNKFDVTWKLAKDIVQHCTQCQ). The Zn(2+) site is built by His-594, His-598, Cys-622, and Cys-625. An Integrase catalytic domain is found at 640-801 (RGLCPNALWQ…TSAEQHLTGK (162 aa)). A DNA-binding region (integrase-type) is located at residues 809-857 (KLIWWKDNKNKTWEIGKVITWGRGFACVSPGENQLPVWIPTRHLKFYNE). The disordered stretch occupies residues 862–888 (AKKSTSAETETPQSSTVDSQDEQNGDV). The span at 867–879 (SAETETPQSSTVD) shows a compositional bias: polar residues.

This sequence belongs to the beta type-B retroviral polymerase family. HERV class-II K(HML-2) pol subfamily.

The enzyme catalyses DNA(n) + a 2'-deoxyribonucleoside 5'-triphosphate = DNA(n+1) + diphosphate. The catalysed reaction is Endonucleolytic cleavage to 5'-phosphomonoester.. Its function is as follows. Early post-infection, the reverse transcriptase converts the viral RNA genome into double-stranded viral DNA. The RNase H domain of the reverse transcriptase performs two functions. It degrades the RNA template and specifically removes the RNA primer from the RNA/DNA hybrid. Following nuclear import, the integrase catalyzes the insertion of the linear, double-stranded viral DNA into the host cell chromosome. Endogenous Pol proteins may have kept, lost or modified their original function during evolution. This chain is Endogenous retrovirus group K member 25 Pol protein (ERVK-25), found in Homo sapiens (Human).